A 104-amino-acid polypeptide reads, in one-letter code: Putative arsenate reductase (104 aa).

Cysteine 12 is an active-site residue.

It belongs to the ArsC family.

It catalyses the reaction [glutaredoxin]-dithiol + arsenate + glutathione + H(+) = glutathionyl-S-S-[glutaredoxin] + arsenite + H2O. In terms of biological role, reduction of arsenate [As(V)] to arsenite [As(III)]. This protein expands the substrate specificity of ArsAB pump which can extrude arsenite and antimonite to allow for arsenate pumping and resistance. The protein is Putative arsenate reductase (yfjU) of Escherichia coli (strain K12).